A 326-amino-acid chain; its full sequence is PDZ domain-containing protein MAGIX (326 aa).

The interval 1-32 (MDSHAGNTADPRGSRRGVGLQGSGSPRARQLL) is disordered. Positions 128–212 (SVELVRGPAG…RLCLVLQRPQ (85 aa)) constitute a PDZ domain. The disordered stretch occupies residues 214–267 (MNGSRSKEVGGGHQKTDRIPDPRGGRMMESRGTISPVHHRPKTRTGPGPSPESV). Over residues 218-242 (RSKEVGGGHQKTDRIPDPRGGRMME) the composition is skewed to basic and acidic residues. Serine 263 carries the phosphoserine modification.

The polypeptide is PDZ domain-containing protein MAGIX (Magix) (Rattus norvegicus (Rat)).